The following is a 30-amino-acid chain: Phospholemman-like protein (30 aa).

It belongs to the FXYD family. Post-translationally, phosphorylated by protein kinase a (PK-A) and protein kinase C (PK-C). Phosphorylated in response to insulin and adrenergic stimulation.

It is found in the microsome membrane. Its subcellular location is the endoplasmic reticulum membrane. Induces a hyperpolarization-activated chloride current when expressed in Xenopus oocytes. May have a functional role in muscle contraction. The polypeptide is Phospholemman-like protein (Squalus acanthias (Spiny dogfish)).